Consider the following 510-residue polypeptide: ATP synthase subunit alpha (510 aa).

169–176 (GDRQTGKT) is a binding site for ATP.

The protein belongs to the ATPase alpha/beta chains family. As to quaternary structure, F-type ATPases have 2 components, CF(1) - the catalytic core - and CF(0) - the membrane proton channel. CF(1) has five subunits: alpha(3), beta(3), gamma(1), delta(1), epsilon(1). CF(0) has three main subunits: a(1), b(2) and c(9-12). The alpha and beta chains form an alternating ring which encloses part of the gamma chain. CF(1) is attached to CF(0) by a central stalk formed by the gamma and epsilon chains, while a peripheral stalk is formed by the delta and b chains.

It is found in the cell inner membrane. The catalysed reaction is ATP + H2O + 4 H(+)(in) = ADP + phosphate + 5 H(+)(out). In terms of biological role, produces ATP from ADP in the presence of a proton gradient across the membrane. The alpha chain is a regulatory subunit. The protein is ATP synthase subunit alpha of Rickettsia conorii (strain ATCC VR-613 / Malish 7).